The following is a 588-amino-acid chain: MASFTTSPCTSAAPKTPKSLSSSATISSPLPKPSQIHIATAKRTHHFKVSCNAPNGDSQPKLDRRDVLLGLGGLAGAASLINNPLAFAEPIHAPEISKCVVPPKDLPPDAIVDNCCPPLATNVIPYKVPKTSPSAMKIRPAIHRMDKEYIAKFEKAIRLMKELPADDPRNFYQQALVHCAYCNGGYVQTDYPDKEIQVHNSWLFFPFHRWYLYFYERILGKLIGDPTFGLPFWNWDTPAGMLIPQYFRNQNSPLYDENRNQSHLPLVMDLGYAGTDTDVTDQERISNNLALMYKSMVTNAGTAELFLGKPYKAGDDPVNKGGGSIENIPHTPVHRWVGDVKPRTQNGEDMGNFYSAGRDILFYCHHSNVDRMWTIWQQLGGKGRRRDFTDSDWLDATFIFYDENKQAVRVRVGDALDNQKLGYKYEFTNLPWLNSKPLPTKKKTGLAARSKAPFVTDVFPLTLDKVVQVKVPRPKKSRSKEEKEAEEEILEIQGIEVAIDQYAKFDVYLNDEDEPEAGKEKAEYAGSFAHLPHKHTGSKKIRTSLSLGLNEPLEDLGAEDDDAVLVTLAPKVGGGVVTVENIKIVYGS.

Positions 1 to 10 (MASFTTSPCT) are enriched in polar residues. Residues 1–32 (MASFTTSPCTSAAPKTPKSLSSSATISSPLPK) are disordered. The N-terminal 50 residues, 1–50 (MASFTTSPCTSAAPKTPKSLSSSATISSPLPKPSQIHIATAKRTHHFKVS), are a transit peptide targeting the chloroplast. Over residues 16–29 (TPKSLSSSATISSP) the composition is skewed to low complexity. Residues 51 to 88 (CNAPNGDSQPKLDRRDVLLGLGGLAGAASLINNPLAFA) constitute a thylakoid transit peptide. 2 cysteine pairs are disulfide-bonded: Cys99–Cys116 and Cys115–Cys179. Positions 178, 199, 208, 330, 334, and 366 each coordinate Cu cation. Positions 182–199 (CNGGYVQTDYPDKEIQVH) form a cross-link, 2'-(S-cysteinyl)-histidine (Cys-His).

It belongs to the tyrosinase family. In terms of assembly, monomer. Cu(2+) is required as a cofactor.

The protein resides in the plastid. Its subcellular location is the chloroplast thylakoid lumen. It catalyses the reaction 2 catechol + O2 = 2 1,2-benzoquinone + 2 H2O. In terms of biological role, catalyzes the oxidation of mono- and o-diphenols to o-diquinones. In Ipomoea batatas (Sweet potato), this protein is Polyphenol oxidase II, chloroplastic (co-2).